The sequence spans 509 residues: Light-independent protochlorophyllide reductase subunit B (509 aa).

D36 is a binding site for [4Fe-4S] cluster. D295 serves as the catalytic Proton donor. 430-431 provides a ligand contact to substrate; it reads GM.

Belongs to the ChlB/BchB/BchZ family. In terms of assembly, protochlorophyllide reductase is composed of three subunits; ChlL, ChlN and ChlB. Forms a heterotetramer of two ChlB and two ChlN subunits. [4Fe-4S] cluster is required as a cofactor.

Its subcellular location is the plastid. The protein localises to the chloroplast. The catalysed reaction is chlorophyllide a + oxidized 2[4Fe-4S]-[ferredoxin] + 2 ADP + 2 phosphate = protochlorophyllide a + reduced 2[4Fe-4S]-[ferredoxin] + 2 ATP + 2 H2O. It functions in the pathway porphyrin-containing compound metabolism; chlorophyll biosynthesis (light-independent). Functionally, component of the dark-operative protochlorophyllide reductase (DPOR) that uses Mg-ATP and reduced ferredoxin to reduce ring D of protochlorophyllide (Pchlide) to form chlorophyllide a (Chlide). This reaction is light-independent. The NB-protein (ChlN-ChlB) is the catalytic component of the complex. This chain is Light-independent protochlorophyllide reductase subunit B, found in Mesostigma viride (Green alga).